Here is a 443-residue protein sequence, read N- to C-terminus: Glucose-6-phosphate isomerase (443 aa).

Glu-285 acts as the Proton donor in catalysis. Residues His-306 and Lys-420 contribute to the active site.

It belongs to the GPI family.

It is found in the cytoplasm. The enzyme catalyses alpha-D-glucose 6-phosphate = beta-D-fructose 6-phosphate. Its pathway is carbohydrate biosynthesis; gluconeogenesis. It functions in the pathway carbohydrate degradation; glycolysis; D-glyceraldehyde 3-phosphate and glycerone phosphate from D-glucose: step 2/4. Catalyzes the reversible isomerization of glucose-6-phosphate to fructose-6-phosphate. This is Glucose-6-phosphate isomerase from Staphylococcus saprophyticus subsp. saprophyticus (strain ATCC 15305 / DSM 20229 / NCIMB 8711 / NCTC 7292 / S-41).